The chain runs to 957 residues: Calsyntenin-3 (957 aa).

Residues 1–19 (MTLLLVSLLLASLLQISSG) form the signal peptide. Topologically, residues 1-21 (MTLLLVSLLLASLLQISSGNK) are cytoplasmic. The Extracellular segment spans residues 20–848 (NKANKHKPWI…SHRNSMVPSA (829 aa)). Residues 22–42 (ANKHKPWIEAEYQGIVMENDN) constitute an intramembrane region (helical). Cadherin domains are found at residues 29-145 (IEAE…APVF) and 146-246 (VERL…KPSW). Topologically, residues 43 to 73 (TVLLNPPLFALDKDAPLRYAGEICGFRLHGS) are cytoplasmic. The segment at residues 74-94 (GVPFKAVILDKATGEGLIRAK) is an intramembrane region (helical). Over 95 to 139 (EPVDCEAQKEHTFTTQAYDCVDGPDGANTKKSHKATVHVRVNDVN) the chain is Cytoplasmic. The segment at residues 140–160 (EFAPVFVERLYRAAVTEGKLY) is an intramembrane region (helical). The Cytoplasmic portion of the chain corresponds to 161-248 (DRILRVEAID…KPTCKPSWQG (88 aa)). A helical transmembrane segment spans residues 249 to 269 (WNKRIEYAPGAGSLALFPGIR). Residues 270–357 (LETCDEPLWN…GTQAVQVPLG (88 aa)) lie on the Lumenal side of the membrane. 5 N-linked (GlcNAc...) asparagine glycosylation sites follow: N299, N327, N347, N508, and N741. Residues 849–869 (ATLIIVVCVGFLVLMVILGLV) form a helical membrane-spanning segment. Residues 870 to 957 (RIHSLHRRVS…RIIESPPHRY (88 aa)) lie on the Cytoplasmic side of the membrane. The disordered stretch occupies residues 916–957 (QQTGVAGVAGGQQEEEDSSDSEAADSPSSDERRIIESPPHRY). Residues 928 to 938 (QEEEDSSDSEA) show a composition bias toward acidic residues. A compositionally biased stretch (basic and acidic residues) spans 944-957 (SDERRIIESPPHRY).

Belongs to the calsyntenin family. As to quaternary structure, interacts (via cadherin domains) with both alpha and beta isoforms of neurexins (NRXN1, NRXN2 and NRXN3). Directly interacts with APBA2. Forms a tripartite complex with APBA2 and APP. Interacts with low affinity with KLC1. Interacts with SLC23A2/SVCT2. In terms of assembly, interacts with CIDEA; inhibiting the lipid transferase activity of CIDEA. Interacts with CIDEC; inhibiting the lipid transferase activity of CIDEC. Proteolytically processed under normal cellular conditions. A primary zeta-cleavage generates a large extracellular (soluble) N-terminal domain (sAlc) and a short C-terminal transmembrane fragment (CTF1). A secondary cleavage catalyzed by gamma-secretase within the transmembrane domain releases the beta-Alc-beta chain in the extracellular milieu and produces an intracellular fragment (AlcICD). This processing is strongly suppressed in the tripartite complex formed with APBA2 and APP, which seems to prevent the association with gamma-secretase. Post-translationally, ubiquitinated: endoplasmic reticulum-localized protein is ubiquitinated and degraded by the endoplasmic reticulum-associated degradation (ERAD) pathway.

It is found in the postsynaptic cell membrane. The protein resides in the endoplasmic reticulum membrane. Its subcellular location is the golgi apparatus membrane. The protein localises to the cell projection. It localises to the dendrite. It is found in the lipid droplet. Functionally, postsynaptic adhesion molecule that binds to presynaptic neurexins to mediate both excitatory and inhibitory synapse formation. Promotes synapse development by acting as a cell adhesion molecule at the postsynaptic membrane, which associates with both neurexin-alpha and neurexin-beta proteins at the presynaptic membrane. Regulates the balance between excitatory and inhibitory synapses by inhibiting formation of excitatory parallel-fiber synapses and promoting formation of inhibitory synapses in the same neuron. May also be involved in ascorbate (vitamin C) uptake via its interaction with SLC23A2/SVCT2. Complex formation with APBA2 and APP, stabilizes APP metabolism and enhances APBA2-mediated suppression of beta-APP40 secretion, due to the retardation of intracellular APP maturation. Its function is as follows. Adipose-specific isoform that plays a key role in adaptive thermogenesis. Facilitates the efficient use of stored triglyceride by promoting multilocular morphology of thermogenic adipocytes: acts by inhibiting the activity of CIDEA and CIDEC on lipid droplets, thereby preventing lipid droplet fusion and facilitating lipid utilization. May also participate in adaptive thermogenesis by promoting sympathetic innervation of thermogenic adipose tissue: acts by driving secretion of neurotrophic factor S100B from brown adipocytes, stimulating neurite outgrowth from sympathetic neurons. The protein is Calsyntenin-3 of Rattus norvegicus (Rat).